We begin with the raw amino-acid sequence, 556 residues long: Oxygen-dependent choline dehydrogenase (556 aa).

4-33 (DYIIIGAGSAGNVLATRLTEDPNTSVLLLE) serves as a coordination point for FAD. Histidine 473 serves as the catalytic Proton acceptor.

It belongs to the GMC oxidoreductase family. The cofactor is FAD.

It catalyses the reaction choline + A = betaine aldehyde + AH2. It carries out the reaction betaine aldehyde + NAD(+) + H2O = glycine betaine + NADH + 2 H(+). It participates in amine and polyamine biosynthesis; betaine biosynthesis via choline pathway; betaine aldehyde from choline (cytochrome c reductase route): step 1/1. Involved in the biosynthesis of the osmoprotectant glycine betaine. Catalyzes the oxidation of choline to betaine aldehyde and betaine aldehyde to glycine betaine at the same rate. The protein is Oxygen-dependent choline dehydrogenase of Escherichia coli O139:H28 (strain E24377A / ETEC).